The primary structure comprises 415 residues: Mulatexin (415 aa).

The signal sequence occupies residues 1–21; it reads MKFRTLLIIFSLVFLLEIVSA. The 44-residue stretch at 23-66 folds into the Chitin-binding type-1 1 domain; that stretch reads EPQCGRDAGGALCHGNLCCSHWGFCGTTAIYCDVDQGCQSQCWS. Cystine bridges form between C26/C41, C35/C47, C40/C54, and C60/C64. The interval 65–127 is disordered; sequence WSSPPPPSPP…PGGPERPDHR (63 aa). Pro residues predominate over residues 67–121; that stretch reads SPPPPSPPPPPPSPPPPSPPPPSPPPPSPPPPSPPPPSPPPPSPPPPSPPPPGGP. Positions 125–167 constitute a Chitin-binding type-1 2 domain; the sequence is DHRCGRALGNPPCNPGRCCSIHNWCGSTAAYCRGSSCQYQCWN. 4 cysteine pairs are disulfide-bonded: C128–C143, C137–C149, C142–C156, and C161–C165. N-linked (GlcNAc...) asparagine glycosylation is present at N264.

Post-translationally, glycosylated.

The protein resides in the secreted. Functionally, chitin-binding protein which slows larval growth when consumed by the lepidopteran species S.ricini and M.brassica, but not when consumed by the mulberry specialist B.mori. Lacks chitinase activity. The protein is Mulatexin of Morus alba (White mulberry).